Reading from the N-terminus, the 471-residue chain is Tryptophanase (471 aa).

Lys-5, Lys-115, and Lys-156 each carry N6-acetyllysine. At Lys-270 the chain carries N6-(pyridoxal phosphate)lysine. An N6-acetyllysine modification is found at Lys-450.

Belongs to the beta-eliminating lyase family. Homotetramer. It depends on pyridoxal 5'-phosphate as a cofactor.

The enzyme catalyses L-tryptophan + H2O = indole + pyruvate + NH4(+). Its pathway is amino-acid degradation; L-tryptophan degradation via pyruvate pathway; indole and pyruvate from L-tryptophan: step 1/1. The protein is Tryptophanase of Shigella boydii serotype 18 (strain CDC 3083-94 / BS512).